The primary structure comprises 465 residues: MESLRIYNTLARDKQVFVPRQSGEVRMYVCGITVYDYCHVGHARMLVVFDLVQRWLRAIGYRVTYVRNITDIDDKIIRRAVENGETIKSLTDRFIGAMHEDESALGIQRPDIEPRATQFIPQMLGMIETLETNGYAYQASDGDVNYSVRKFTNYGKLSGKSLDDLRAGERVAANDAKEDPLDFVLWKRAKPEDPEGASWASKYGMGRPGWHIECSAMGCSLLGNHFDIHGGGQDLQFPHHENEIAQSEGATGETFVNYWMHNGFVQVDNEKMSKSLGNFFTIREVLERYDAEVMRFFIVRTHYRSPLNYSDVHLDDARASLTRLYTALKDVDADTLALDWNEPHAQRFAAAMNDDFNTPVAVATLFELAGEVNRTRDASLARQLKQLAGLLGLLGREPRAFLQQASGAAQAGGLAADEIEAKIAARVAAKQAKDYAEADRIRAELLEAGIALEDKPGGSTEWRRV.

A Zn(2+)-binding site is contributed by cysteine 30. Residues 32 to 42 (ITVYDYCHVGH) carry the 'HIGH' region motif. Residues cysteine 214, histidine 239, and glutamate 243 each coordinate Zn(2+). The 'KMSKS' region motif lies at 271 to 275 (KMSKS). Lysine 274 serves as a coordination point for ATP.

It belongs to the class-I aminoacyl-tRNA synthetase family. Monomer. The cofactor is Zn(2+).

It localises to the cytoplasm. The catalysed reaction is tRNA(Cys) + L-cysteine + ATP = L-cysteinyl-tRNA(Cys) + AMP + diphosphate. The chain is Cysteine--tRNA ligase from Burkholderia cenocepacia (strain ATCC BAA-245 / DSM 16553 / LMG 16656 / NCTC 13227 / J2315 / CF5610) (Burkholderia cepacia (strain J2315)).